The sequence spans 220 residues: LOB domain-containing protein 31 (220 aa).

The LOB domain maps to G10 to L112. The segment at G117–I172 is disordered. The span at S123–L139 shows a compositional bias: polar residues.

It belongs to the LOB domain-containing protein family. Expressed in roots, stems and flowers.

The polypeptide is LOB domain-containing protein 31 (LBD31) (Arabidopsis thaliana (Mouse-ear cress)).